The following is a 412-amino-acid chain: Polyferredoxin protein MvhB (412 aa).

4Fe-4S ferredoxin-type domains follow at residues 2-29 (IVINKEDCIRCGACQGVCPTGAISVKPE), 30-57 (DVIYCDMCGGEPKCVEACPNDALRHEDI), 66-95 (KKITYSPEKCDKCGECVKVCPPGILKLVND), 96-127 (GKASRVPLEGFCVLCQQCVNVCPIEVIGIEGV), 138-166 (DKPIYIVDCVGCGLCVPECPVNAITLPKY), 168-197 (ESIEIDEEKCIKCGICAQTCPWNSVYISGK), 207-236 (ENFTLDKEECIGCNTCVEICPGGFIEPKSD), 237-265 (LTVSLPEICPACGLCEKLCPTDAIELEVK), 275-304 (EGIVYNDENCKFCGRCALNCPNEAIRVVSP), 311-344 (GLKKVDEKESYTICTTCGACTTVCPTGALKLVEV), 356-385 (NRIQYNPSLCDKCGNCVDVCPYGILKLTDD), and 386-412 (EKLPVKGFCILCEKCIDACRFNALLIK). [4Fe-4S] cluster-binding residues include Cys9, Cys12, Cys15, and Cys19. 36 residues coordinate [4Fe-4S] cluster: Cys75, Cys78, Cys81, Cys85, Cys107, Cys110, Cys113, Cys117, Cys146, Cys149, Cys152, Cys156, Cys177, Cys180, Cys183, Cys187, Cys216, Cys219, Cys222, Cys226, Cys245, Cys248, Cys251, Cys255, Cys284, Cys287, Cys290, Cys294, Cys324, Cys327, Cys330, Cys334, Cys365, Cys368, Cys371, and Cys375.

[4Fe-4S] cluster serves as cofactor.

This is Polyferredoxin protein MvhB (mvhB) from Methanothermus fervidus.